The following is a 115-amino-acid chain: NADH-ubiquinone oxidoreductase chain 3 (115 aa).

3 consecutive transmembrane segments (helical) span residues 3-23, 55-75, and 86-106; these read LMLT…IAFW, FFLV…LLPL, and TMLT…AYEW.

It belongs to the complex I subunit 3 family. Core subunit of respiratory chain NADH dehydrogenase (Complex I) which is composed of 45 different subunits. Interacts with TMEM186. Interacts with TMEM242.

Its subcellular location is the mitochondrion inner membrane. The enzyme catalyses a ubiquinone + NADH + 5 H(+)(in) = a ubiquinol + NAD(+) + 4 H(+)(out). Functionally, core subunit of the mitochondrial membrane respiratory chain NADH dehydrogenase (Complex I) which catalyzes electron transfer from NADH through the respiratory chain, using ubiquinone as an electron acceptor. Essential for the catalytic activity of complex I. The chain is NADH-ubiquinone oxidoreductase chain 3 from Ceratotherium simum (White rhinoceros).